The primary structure comprises 325 residues: Collagen alpha-1(IX) chain (325 aa).

The span at 1–54 (PGQLGNSGKPGQQGPPGEVGPRGPRGLPGSRGPVGPEGSPGIPGKLGPLGSPGL) shows a compositional bias: low complexity. 2 disordered regions span residues 1–163 (PGQL…APTD) and 187–325 (RPDT…GPDK). A compositionally biased stretch (pro residues) spans 198 to 208 (RPGPPGPPGPP). Residues 237-249 (PKGDLGEKGERGP) are compositionally biased toward basic and acidic residues. The span at 292 to 304 (VPGPPGPPGPPGF) shows a compositional bias: pro residues.

The protein belongs to the fibril-associated collagens with interrupted helices (FACIT) family. As to quaternary structure, heterotrimer of an alpha 1(IX), an alpha 2(IX) and an alpha 3(IX) chain. Post-translationally, covalently linked to the telopeptides of type II collagen by lysine-derived cross-links. Prolines at the third position of the tripeptide repeating unit (G-X-Y) are hydroxylated in some or all of the chains.

Its subcellular location is the secreted. The protein localises to the extracellular space. It is found in the extracellular matrix. In terms of biological role, structural component of hyaline cartilage and vitreous of the eye. The protein is Collagen alpha-1(IX) chain (Col9a1) of Rattus norvegicus (Rat).